An 88-amino-acid chain; its full sequence is Cell division topological specificity factor (88 aa).

Belongs to the MinE family.

Functionally, prevents the cell division inhibition by proteins MinC and MinD at internal division sites while permitting inhibition at polar sites. This ensures cell division at the proper site by restricting the formation of a division septum at the midpoint of the long axis of the cell. The chain is Cell division topological specificity factor from Escherichia coli (strain SMS-3-5 / SECEC).